We begin with the raw amino-acid sequence, 278 residues long: Undecaprenyl-diphosphatase (278 aa).

8 consecutive transmembrane segments (helical) span residues 3–23 (YILI…IPIS), 42–62 (VAYS…IIYF), 88–108 (FLVI…LFVI), 112–132 (ILGL…IIIY), 152–172 (IIIV…RSGI), 190–210 (LSFI…VLFS), 225–245 (GLLI…NALL), and 253–273 (VVVL…LSGI).

This sequence belongs to the UppP family.

It localises to the cell membrane. The catalysed reaction is di-trans,octa-cis-undecaprenyl diphosphate + H2O = di-trans,octa-cis-undecaprenyl phosphate + phosphate + H(+). Functionally, catalyzes the dephosphorylation of undecaprenyl diphosphate (UPP). The protein is Undecaprenyl-diphosphatase of Saccharolobus islandicus (strain M.16.4 / Kamchatka #3) (Sulfolobus islandicus).